A 469-amino-acid polypeptide reads, in one-letter code: UDP-N-acetylmuramoylalanine--D-glutamate ligase (469 aa).

Residue 123-129 (GTNGKST) participates in ATP binding.

Belongs to the MurCDEF family.

The protein resides in the cytoplasm. It carries out the reaction UDP-N-acetyl-alpha-D-muramoyl-L-alanine + D-glutamate + ATP = UDP-N-acetyl-alpha-D-muramoyl-L-alanyl-D-glutamate + ADP + phosphate + H(+). It functions in the pathway cell wall biogenesis; peptidoglycan biosynthesis. Functionally, cell wall formation. Catalyzes the addition of glutamate to the nucleotide precursor UDP-N-acetylmuramoyl-L-alanine (UMA). This is UDP-N-acetylmuramoylalanine--D-glutamate ligase from Caulobacter sp. (strain K31).